A 191-amino-acid polypeptide reads, in one-letter code: MEYFDMRKMSVNLWRNAAGETREICTFPPAKRDFYWRASIASIAANGEFSLFPGMERIVTLLEGGEMLLESADRFNHTLKPLQPFAFAADQVVKAKLTAGQMSMDFNIMTRLDVCKAKVRIAERTFTTFGSCGGVVFVINGAWQLGDKLLTTDQGACWFDGRHTLRLLQPQGKLLFSEINWLAGHSPDQVQ.

This sequence belongs to the Ves family.

This is Protein Ves from Escherichia coli (strain 55989 / EAEC).